The primary structure comprises 456 residues: uncharacterized protein (456 aa).

Basic and acidic residues-rich tracts occupy residues 181 to 210 (DQRK…DKKV) and 217 to 231 (KEIE…ENEE). Residues 181–231 (DQRKESIVNDERKKNPEFREKPDKNEDKKVKPPPSLKEIENKGIDHEENEE) are disordered. Residues 216 to 248 (LKEIENKGIDHEENEEDKKRELMFKLQLLQKQY) are a coiled coil. A helical transmembrane segment spans residues 347 to 365 (LALAILFNAVWFIAAKMIM). Residues 383 to 407 (NKSGTTPNSVSPRTWGNSKSPQSEF) show a composition bias toward polar residues. The segment at 383–456 (NKSGTTPNSV…MREQGIETLK (74 aa)) is disordered. Residues 441 to 456 (DESRREMREQGIETLK) show a composition bias toward basic and acidic residues.

The protein belongs to the IIV-6 067R family.

The protein resides in the membrane. This is an uncharacterized protein from Invertebrate iridescent virus 6 (IIV-6).